Reading from the N-terminus, the 221-residue chain is Deoxyribose-phosphate aldolase (221 aa).

D89 (proton donor/acceptor) is an active-site residue. Residue K151 is the Schiff-base intermediate with acetaldehyde of the active site. K180 (proton donor/acceptor) is an active-site residue.

Belongs to the DeoC/FbaB aldolase family. DeoC type 1 subfamily.

It localises to the cytoplasm. The catalysed reaction is 2-deoxy-D-ribose 5-phosphate = D-glyceraldehyde 3-phosphate + acetaldehyde. It functions in the pathway carbohydrate degradation; 2-deoxy-D-ribose 1-phosphate degradation; D-glyceraldehyde 3-phosphate and acetaldehyde from 2-deoxy-alpha-D-ribose 1-phosphate: step 2/2. Its function is as follows. Catalyzes a reversible aldol reaction between acetaldehyde and D-glyceraldehyde 3-phosphate to generate 2-deoxy-D-ribose 5-phosphate. This chain is Deoxyribose-phosphate aldolase, found in Mesomycoplasma hyopneumoniae (strain 232) (Mycoplasma hyopneumoniae).